We begin with the raw amino-acid sequence, 331 residues long: MTMHIRWRGMELPSSLEVDRDSLTQTYGKFSAEPFERGFGASIGNSMRRVLLSSLVGSAVTQIKIRGAQHEFTTIPGVLEDVTDIVLNVKSLIVNSNTDSTRVITVERNTAGVVTGADVQTDADVEIINKDHVICTLTDDVPFMMEMVVETGRGYVPSTEHSSVDHEIGIIPIDAVFSPIVRVRYEVEATRVGQKTNYDRLNLEIWTDGTINPEMALTEAAKILRKHLNPFVQYRELGPSIFSAARGGAGSPEAQLEAKLNMTLADLRLSVRANNCLESENIMTVRDLVQRTEDSLLEVRNFGDTTLNEVREKLSQYGLHLGMRVPNQPLF.

Residues 1-235 (MTMHIRWRGM…KHLNPFVQYR (235 aa)) form an alpha N-terminal domain (alpha-NTD) region. The interval 255–331 (QLEAKLNMTL…GMRVPNQPLF (77 aa)) is alpha C-terminal domain (alpha-CTD).

This sequence belongs to the RNA polymerase alpha chain family. Homodimer. The RNAP catalytic core consists of 2 alpha, 1 beta, 1 beta' and 1 omega subunit. When a sigma factor is associated with the core the holoenzyme is formed, which can initiate transcription.

The enzyme catalyses RNA(n) + a ribonucleoside 5'-triphosphate = RNA(n+1) + diphosphate. Its function is as follows. DNA-dependent RNA polymerase catalyzes the transcription of DNA into RNA using the four ribonucleoside triphosphates as substrates. This Rhodopirellula baltica (strain DSM 10527 / NCIMB 13988 / SH1) protein is DNA-directed RNA polymerase subunit alpha.